The chain runs to 309 residues: UDP-N-acetylenolpyruvoylglucosamine reductase (309 aa).

The 166-residue stretch at 33 to 198 (RVGGPAQVLF…TSARFRGTPA (166 aa)) folds into the FAD-binding PCMH-type domain. The active site involves Arg178. The active-site Proton donor is Ser227. Residue Glu297 is part of the active site.

The protein belongs to the MurB family. FAD serves as cofactor.

The protein resides in the cytoplasm. The enzyme catalyses UDP-N-acetyl-alpha-D-muramate + NADP(+) = UDP-N-acetyl-3-O-(1-carboxyvinyl)-alpha-D-glucosamine + NADPH + H(+). The protein operates within cell wall biogenesis; peptidoglycan biosynthesis. Its function is as follows. Cell wall formation. In Rhodopseudomonas palustris (strain HaA2), this protein is UDP-N-acetylenolpyruvoylglucosamine reductase.